The chain runs to 318 residues: Geranylfarnesyl diphosphate synthase (318 aa).

Isopentenyl diphosphate contacts are provided by K31, R34, and H65. Positions 72 and 76 each coordinate Mg(2+). R81 is an an all-trans-polyprenyl diphosphate binding site. Residue R82 coordinates isopentenyl diphosphate. An all-trans-polyprenyl diphosphate is bound by residues K166, T167, and Q204.

This sequence belongs to the FPP/GGPP synthase family. As to quaternary structure, homodimer. Mg(2+) is required as a cofactor.

It carries out the reaction isopentenyl diphosphate + (2E,6E,10E)-geranylgeranyl diphosphate = (2E,6E,10E,14E)-geranylfarnesyl diphosphate + diphosphate. Functionally, probably involved in biosynthesis of the precursor for C25 (sesterterpanyl chain) moiety of C25-C25 diether (2,3-di-O-sesterterpanyl-sn-glycero) membrane lipid. Catalyzes the condensation of isopentenyl pyrophosphate with the allylic pyrophosphates to yield all-trans geranylfarnesyl diphosphate (GFPP). Geranylgeranyl diphosphate (GGPP) is the preferred substrate, however methylallyl diphosphate (DMAPP), farnesyl diphosphate (FPP) and geranyl diphosphate (GPP) can also be used as allylic substrate. The sequence is that of Geranylfarnesyl diphosphate synthase (fgs) from Aeropyrum pernix.